The chain runs to 451 residues: F-box/LRR-repeat protein 13 (451 aa).

The 54-residue stretch at 17 to 70 (VDWISKLPDCLLCEVLLNLPTKDVVKTSVLSRRWRNLWKHVPGLDLDNTDFQEF) folds into the F-box domain. LRR repeat units lie at residues 128–155 (DDSY…KLCG), 177–202 (TKFA…TIER), 224–251 (VADS…RLSD), and 335–363 (CVEF…VVKS). The region spanning 370 to 421 (GENIILPGPRRFLSSLEYVKIERPLKGEAMEMKLVSYLLENSTILKKLTLCL) is the FBD domain.

The chain is F-box/LRR-repeat protein 13 (FBL13) from Arabidopsis thaliana (Mouse-ear cress).